Consider the following 241-residue polypeptide: Carboxy-S-adenosyl-L-methionine synthase 1 (241 aa).

Residues tyrosine 37, 61–63 (GCS), asparagine 131, and arginine 198 contribute to the S-adenosyl-L-methionine site.

It belongs to the class I-like SAM-binding methyltransferase superfamily. Cx-SAM synthase family. As to quaternary structure, homodimer.

The enzyme catalyses prephenate + S-adenosyl-L-methionine = carboxy-S-adenosyl-L-methionine + 3-phenylpyruvate + H2O. Functionally, catalyzes the conversion of S-adenosyl-L-methionine (SAM) to carboxy-S-adenosyl-L-methionine (Cx-SAM). The chain is Carboxy-S-adenosyl-L-methionine synthase 1 from Yersinia pseudotuberculosis serotype IB (strain PB1/+).